A 125-amino-acid chain; its full sequence is Aspartate 1-decarboxylase 2 (125 aa).

Catalysis depends on Ser-25, which acts as the Schiff-base intermediate with substrate; via pyruvic acid. Residue Ser-25 is modified to Pyruvic acid (Ser). Thr-57 is a binding site for substrate. Tyr-58 acts as the Proton donor in catalysis. 73–75 contributes to the substrate binding site; that stretch reads GAA.

It belongs to the PanD family. In terms of assembly, heterooctamer of four alpha and four beta subunits. Requires pyruvate as cofactor. Is synthesized initially as an inactive proenzyme, which is activated by self-cleavage at a specific serine bond to produce a beta-subunit with a hydroxyl group at its C-terminus and an alpha-subunit with a pyruvoyl group at its N-terminus.

It is found in the cytoplasm. The catalysed reaction is L-aspartate + H(+) = beta-alanine + CO2. The protein operates within cofactor biosynthesis; (R)-pantothenate biosynthesis; beta-alanine from L-aspartate: step 1/1. In terms of biological role, catalyzes the pyruvoyl-dependent decarboxylation of aspartate to produce beta-alanine. The polypeptide is Aspartate 1-decarboxylase 2 (Gloeobacter violaceus (strain ATCC 29082 / PCC 7421)).